The sequence spans 100 residues: Small ribosomal subunit protein uS14c (100 aa).

This sequence belongs to the universal ribosomal protein uS14 family. As to quaternary structure, part of the 30S ribosomal subunit.

The protein resides in the plastid. Its subcellular location is the chloroplast. In terms of biological role, binds 16S rRNA, required for the assembly of 30S particles. The protein is Small ribosomal subunit protein uS14c of Draba nemorosa (Woodland whitlowgrass).